The following is a 211-amino-acid chain: Beta-crystallin B3 (211 aa).

Met1 is subject to N-acetylmethionine. Ala2 carries the post-translational modification N-acetylalanine; in Beta-crystallin B3, N-terminally processed. Residues 2-23 (AEQHGAPEQAAASKSHGGLGGS) form an N-terminal arm region. 2 Beta/gamma crystallin 'Greek key' domains span residues 24–63 (YKVT…QVES) and 64–108 (GPWL…RPLH). Residues 109 to 113 (IDGPD) are connecting peptide. Beta/gamma crystallin 'Greek key' domains follow at residues 114–155 (HKLH…RVIN) and 156–198 (GTWV…RRIR). The tract at residues 200–211 (QKWHKRGCFLSS) is C-terminal arm.

The protein belongs to the beta/gamma-crystallin family. Homo/heterodimer, or complexes of higher-order. The structure of beta-crystallin oligomers seems to be stabilized through interactions between the N-terminal arms.

Crystallins are the dominant structural components of the vertebrate eye lens. This chain is Beta-crystallin B3 (Crybb3), found in Rattus norvegicus (Rat).